The chain runs to 189 residues: Interferon alpha-12 (189 aa).

A signal peptide spans 1–23; it reads MARLCAFLMTLLVMSYWSTCSLG. 2 disulfide bridges follow: Cys-24-Cys-122 and Cys-52-Cys-162. N-linked (GlcNAc...) asparagine glycosylation is present at Asn-101.

This sequence belongs to the alpha/beta interferon family.

The protein localises to the secreted. Its function is as follows. Produced by macrophages, IFN-alpha have antiviral activities. Interferon stimulates the production of two enzymes: a protein kinase and an oligoadenylate synthetase. The polypeptide is Interferon alpha-12 (Ifna12) (Mus musculus (Mouse)).